Reading from the N-terminus, the 121-residue chain is Small ribosomal subunit protein uS13 (121 aa).

The interval 91 to 121 is disordered; that stretch reads HRRGLPVRGQKTKNNARTRKGPVKTVANKKK.

The protein belongs to the universal ribosomal protein uS13 family. In terms of assembly, part of the 30S ribosomal subunit. Forms a loose heterodimer with protein S19. Forms two bridges to the 50S subunit in the 70S ribosome.

Functionally, located at the top of the head of the 30S subunit, it contacts several helices of the 16S rRNA. In the 70S ribosome it contacts the 23S rRNA (bridge B1a) and protein L5 of the 50S subunit (bridge B1b), connecting the 2 subunits; these bridges are implicated in subunit movement. Contacts the tRNAs in the A and P-sites. This chain is Small ribosomal subunit protein uS13, found in Staphylococcus carnosus (strain TM300).